Reading from the N-terminus, the 477-residue chain is Myc-associated zinc finger protein (477 aa).

2 disordered regions span residues 59–78 and 121–144; these read AQSP…APAA and TVDT…SAPA. Residues 130 to 140 are compositionally biased toward pro residues; the sequence is PPAPPPPPPAV. C2H2-type zinc fingers lie at residues 190–212, 279–301, 307–329, and 337–360; these read YICA…EAIH, HACE…KLSH, YQCP…VRSH, and YNCS…RQVH. At Ser-361 the chain carries Phosphoserine. The C2H2-type 5 zinc-finger motif lies at 366 to 388; it reads FKCEKCEAAFATKDRLRAHTVRH. The C2H2-type 6; atypical zinc-finger motif lies at 392–413; that stretch reads VPCHVCGKMLSSAYISDHMKVH.

Interacts with BPTF. In terms of tissue distribution, expressed in Purkinje cells in the brain (at protein level).

It localises to the nucleus. Its function is as follows. Transcriptional regulator. Acts as a transcriptional activator that binds to purine-rich GAGA sites found in the promoter of many genes including insulin I and II and islet amyloid polypeptide. This chain is Myc-associated zinc finger protein (Maz), found in Mus musculus (Mouse).